The primary structure comprises 211 residues: Thymidylate kinase (211 aa).

11–18 (GPDGAGKT) contributes to the ATP binding site.

The protein belongs to the thymidylate kinase family.

It carries out the reaction dTMP + ATP = dTDP + ADP. In terms of biological role, phosphorylation of dTMP to form dTDP in both de novo and salvage pathways of dTTP synthesis. In Streptococcus equi subsp. zooepidemicus (strain H70), this protein is Thymidylate kinase.